The primary structure comprises 430 residues: UDP-N-acetylmuramoylalanine--D-glutamate ligase (430 aa).

109–115 (GTDGKST) serves as a coordination point for ATP.

Belongs to the MurCDEF family.

The protein localises to the cytoplasm. It carries out the reaction UDP-N-acetyl-alpha-D-muramoyl-L-alanine + D-glutamate + ATP = UDP-N-acetyl-alpha-D-muramoyl-L-alanyl-D-glutamate + ADP + phosphate + H(+). The protein operates within cell wall biogenesis; peptidoglycan biosynthesis. In terms of biological role, cell wall formation. Catalyzes the addition of glutamate to the nucleotide precursor UDP-N-acetylmuramoyl-L-alanine (UMA). This chain is UDP-N-acetylmuramoylalanine--D-glutamate ligase, found in Thermotoga sp. (strain RQ2).